A 277-amino-acid polypeptide reads, in one-letter code: 3-methyl-2-oxobutanoate hydroxymethyltransferase (277 aa).

Mg(2+) is bound by residues aspartate 49 and aspartate 88. 3-methyl-2-oxobutanoate is bound by residues 49 to 50 (DS), aspartate 88, and lysine 118. Glutamate 120 serves as a coordination point for Mg(2+). Residue glutamate 186 is the Proton acceptor of the active site.

The protein belongs to the PanB family. Homodecamer; pentamer of dimers. It depends on Mg(2+) as a cofactor.

Its subcellular location is the cytoplasm. It catalyses the reaction 3-methyl-2-oxobutanoate + (6R)-5,10-methylene-5,6,7,8-tetrahydrofolate + H2O = 2-dehydropantoate + (6S)-5,6,7,8-tetrahydrofolate. It participates in cofactor biosynthesis; (R)-pantothenate biosynthesis; (R)-pantoate from 3-methyl-2-oxobutanoate: step 1/2. Catalyzes the reversible reaction in which hydroxymethyl group from 5,10-methylenetetrahydrofolate is transferred onto alpha-ketoisovalerate to form ketopantoate. The polypeptide is 3-methyl-2-oxobutanoate hydroxymethyltransferase (Cereibacter sphaeroides (strain ATCC 17025 / ATH 2.4.3) (Rhodobacter sphaeroides)).